The primary structure comprises 89 residues: Small ribosomal subunit protein uS15 (89 aa).

This sequence belongs to the universal ribosomal protein uS15 family. Part of the 30S ribosomal subunit. Forms a bridge to the 50S subunit in the 70S ribosome, contacting the 23S rRNA.

Functionally, one of the primary rRNA binding proteins, it binds directly to 16S rRNA where it helps nucleate assembly of the platform of the 30S subunit by binding and bridging several RNA helices of the 16S rRNA. Forms an intersubunit bridge (bridge B4) with the 23S rRNA of the 50S subunit in the ribosome. This chain is Small ribosomal subunit protein uS15, found in Nitrosospira multiformis (strain ATCC 25196 / NCIMB 11849 / C 71).